Here is a 392-residue protein sequence, read N- to C-terminus: Succinyl-diaminopimelate desuccinylase (392 aa).

His78 contacts Zn(2+). Residue Asp80 is part of the active site. Residue Asp110 coordinates Zn(2+). Residue Glu145 is the Proton acceptor of the active site. Residues Glu146, Glu174, and His363 each contribute to the Zn(2+) site.

This sequence belongs to the peptidase M20A family. DapE subfamily. In terms of assembly, homodimer. It depends on Zn(2+) as a cofactor. Co(2+) is required as a cofactor.

The enzyme catalyses N-succinyl-(2S,6S)-2,6-diaminopimelate + H2O = (2S,6S)-2,6-diaminopimelate + succinate. It participates in amino-acid biosynthesis; L-lysine biosynthesis via DAP pathway; LL-2,6-diaminopimelate from (S)-tetrahydrodipicolinate (succinylase route): step 3/3. In terms of biological role, catalyzes the hydrolysis of N-succinyl-L,L-diaminopimelic acid (SDAP), forming succinate and LL-2,6-diaminopimelate (DAP), an intermediate involved in the bacterial biosynthesis of lysine and meso-diaminopimelic acid, an essential component of bacterial cell walls. This Methylobacterium radiotolerans (strain ATCC 27329 / DSM 1819 / JCM 2831 / NBRC 15690 / NCIMB 10815 / 0-1) protein is Succinyl-diaminopimelate desuccinylase.